The primary structure comprises 389 residues: Transcription factor TGAL10 (389 aa).

The tract at residues D80–I110 is disordered. Residues S91 to I110 are compositionally biased toward basic and acidic residues. Residues R107–R151 enclose the bZIP domain. The basic motif stretch occupies residues K109 to K129. The interval L135–I149 is leucine-zipper. Residues V176–G389 enclose the DOG1 domain. Disordered stretches follow at residues T320–G345 and H370–G389. Residues L380–G389 are compositionally biased toward basic residues.

The protein belongs to the bZIP family.

The protein localises to the nucleus. Functionally, transcriptional regulator involved in defense response. This is Transcription factor TGAL10 from Oryza sativa subsp. japonica (Rice).